The following is a 403-amino-acid chain: MYKFKTNLFLVIYFIAIFSIESSISSFNTEINSNSNSDFGHMEIPKNIEDIPFICYNNLSDSSYYLKNNQYFYEPISTIIDNSVSYFPNNCSNISDKNSLSCCLKIDSDQFKSTMDYITSDSLNTSVIGRLYDCRTNSSLGGGFKIVEDNGNTPDLETMSNELDVIDSRESVKICLSQLQQLQCFKCSQDHKTILRDFHTDLLYRIESDPNHQPLFYIKSSTFKHPIIDTSNDGFPTTGAGGADNTIHYIEKDISKGKSIAICNDYFEKLMSHCQFVNVRGKPLNQLFQPLNGKPAVFDSENYINEIFGITIPNLNEFVYVSSDNLDLFYVSNFNCFKQPIPNFQQPTCSLIINKKWYEKSQNSNDYNNNNDSDNSSFGISIQKYLNSFLNSFIIILIINIII.

Positions 1–26 are cleaved as a signal peptide; the sequence is MYKFKTNLFLVIYFIAIFSIESSISS. Residues 27–381 are Extracellular-facing; it reads FNTEINSNSN…DSDNSSFGIS (355 aa). Residues Asn-58, Asn-90, Asn-93, Asn-124, Asn-137, Asn-371, and Asn-375 are each glycosylated (N-linked (GlcNAc...) asparagine). A helical membrane pass occupies residues 382–402; sequence IQKYLNSFLNSFIIILIINII. A topological domain (cytoplasmic) is located at residue Ile-403.

The protein localises to the membrane. This is an uncharacterized protein from Dictyostelium discoideum (Social amoeba).